Reading from the N-terminus, the 455-residue chain is EP1-like glycoprotein 1 (455 aa).

Residues 1–22 (MLRFDYLLITALAISTVSVVMA) form the signal peptide. The 121-residue stretch at 43–163 (TEYDASYRFL…HGKFVWQSFD (121 aa)) folds into the Bulb-type lectin domain. N-linked (GlcNAc...) asparagine glycans are attached at residues N106, N191, N211, N241, and N289. C374 bears the S-nitrosocysteine mark. Residues 374 to 455 (CSGGKGKAVN…NTSSVAYIKY (82 aa)) form the PAN domain. 2 disulfide bridges follow: C410/C432 and C414/C420. A glycan (N-linked (GlcNAc...) asparagine) is linked at N446.

The protein resides in the secreted. It localises to the cell wall. The polypeptide is EP1-like glycoprotein 1 (Arabidopsis thaliana (Mouse-ear cress)).